Consider the following 189-residue polypeptide: dCTP deaminase, dUMP-forming (189 aa).

DCTP is bound by residues 101-106 (KSSLGR), D119, 127-129 (TLE), Q148, Y162, and Q174. E129 functions as the Proton donor/acceptor in the catalytic mechanism.

It belongs to the dCTP deaminase family. In terms of assembly, homotrimer.

The enzyme catalyses dCTP + 2 H2O = dUMP + NH4(+) + diphosphate. Its pathway is pyrimidine metabolism; dUMP biosynthesis; dUMP from dCTP: step 1/1. Its function is as follows. Bifunctional enzyme that catalyzes both the deamination of dCTP to dUTP and the hydrolysis of dUTP to dUMP without releasing the toxic dUTP intermediate. The polypeptide is dCTP deaminase, dUMP-forming (Rhodococcus opacus (strain B4)).